Reading from the N-terminus, the 185-residue chain is Photosystem I assembly protein Ycf4 (185 aa).

A run of 2 helical transmembrane segments spans residues 20 to 40 (GNFFWACILFLGSLGFLSVGA) and 57 to 77 (ILFFPQGVVMSFYGIAGLFIS).

The protein belongs to the Ycf4 family.

Its subcellular location is the plastid. It is found in the chloroplast thylakoid membrane. Functionally, seems to be required for the assembly of the photosystem I complex. This Agrostis stolonifera (Creeping bentgrass) protein is Photosystem I assembly protein Ycf4.